A 484-amino-acid chain; its full sequence is Membrane-bound lytic murein transglycosylase F (484 aa).

Residues 1–18 (MKGLLLRIIAAFALVLWA) form the signal peptide. The tract at residues 19 to 267 (IDMVFPWQQM…RIEEKYFNHF (249 aa)) is non-LT domain. The tract at residues 268–484 (SQFDYVDMRQ…PLTDNQEKQE (217 aa)) is LT domain. Residue glutamate 312 is part of the active site. Residues 459 to 484 (ADNKDKPSETDENLPLPLTDNQEKQE) are disordered.

The protein in the N-terminal section; belongs to the bacterial solute-binding protein 3 family. It in the C-terminal section; belongs to the transglycosylase Slt family.

Its subcellular location is the cell outer membrane. The enzyme catalyses Exolytic cleavage of the (1-&gt;4)-beta-glycosidic linkage between N-acetylmuramic acid (MurNAc) and N-acetylglucosamine (GlcNAc) residues in peptidoglycan, from either the reducing or the non-reducing ends of the peptidoglycan chains, with concomitant formation of a 1,6-anhydrobond in the MurNAc residue.. Functionally, murein-degrading enzyme that degrades murein glycan strands and insoluble, high-molecular weight murein sacculi, with the concomitant formation of a 1,6-anhydromuramoyl product. Lytic transglycosylases (LTs) play an integral role in the metabolism of the peptidoglycan (PG) sacculus. Their lytic action creates space within the PG sacculus to allow for its expansion as well as for the insertion of various structures such as secretion systems and flagella. The protein is Membrane-bound lytic murein transglycosylase F of Mannheimia succiniciproducens (strain KCTC 0769BP / MBEL55E).